The following is a 128-amino-acid chain: Small ribosomal subunit protein uS11 (128 aa).

It belongs to the universal ribosomal protein uS11 family. Part of the 30S ribosomal subunit. Interacts with proteins S7 and S18. Binds to IF-3.

Its function is as follows. Located on the platform of the 30S subunit, it bridges several disparate RNA helices of the 16S rRNA. Forms part of the Shine-Dalgarno cleft in the 70S ribosome. This is Small ribosomal subunit protein uS11 from Leuconostoc mesenteroides subsp. mesenteroides (strain ATCC 8293 / DSM 20343 / BCRC 11652 / CCM 1803 / JCM 6124 / NCDO 523 / NBRC 100496 / NCIMB 8023 / NCTC 12954 / NRRL B-1118 / 37Y).